A 367-amino-acid chain; its full sequence is UDP-N-acetylglucosamine--N-acetylmuramyl-(pentapeptide) pyrophosphoryl-undecaprenol N-acetylglucosamine transferase (367 aa).

UDP-N-acetyl-alpha-D-glucosamine-binding positions include 11–13, asparagine 125, arginine 163, serine 197, and glutamine 289; that span reads TAG.

The protein belongs to the glycosyltransferase 28 family. MurG subfamily.

The protein localises to the cell membrane. The catalysed reaction is di-trans,octa-cis-undecaprenyl diphospho-N-acetyl-alpha-D-muramoyl-L-alanyl-D-glutamyl-meso-2,6-diaminopimeloyl-D-alanyl-D-alanine + UDP-N-acetyl-alpha-D-glucosamine = di-trans,octa-cis-undecaprenyl diphospho-[N-acetyl-alpha-D-glucosaminyl-(1-&gt;4)]-N-acetyl-alpha-D-muramoyl-L-alanyl-D-glutamyl-meso-2,6-diaminopimeloyl-D-alanyl-D-alanine + UDP + H(+). It participates in cell wall biogenesis; peptidoglycan biosynthesis. Cell wall formation. Catalyzes the transfer of a GlcNAc subunit on undecaprenyl-pyrophosphoryl-MurNAc-pentapeptide (lipid intermediate I) to form undecaprenyl-pyrophosphoryl-MurNAc-(pentapeptide)GlcNAc (lipid intermediate II). The polypeptide is UDP-N-acetylglucosamine--N-acetylmuramyl-(pentapeptide) pyrophosphoryl-undecaprenol N-acetylglucosamine transferase (Clavibacter sepedonicus (Clavibacter michiganensis subsp. sepedonicus)).